We begin with the raw amino-acid sequence, 365 residues long: BTB/POZ and TAZ domain-containing protein 1 (365 aa).

The region spanning 25 to 96 (TDVEIITSGR…LYSPSVTENE (72 aa)) is the BTB domain. A Nuclear localization signal motif is present at residues 193–202 (RKKRRRRHRR). The segment at 205–304 (NLYLQLSEAM…SESCRVPLCR (100 aa)) adopts a TAZ-type zinc-finger fold. The tract at residues 315-338 (KMVEDTKWKVLVRRVASAKAMSSL) is caM-binding.

As to quaternary structure, interacts with CUL3A. Interacts with GTE9/BET9 and GTE11/BET10 through the BTB domain. In terms of tissue distribution, preferentially expressed in young leaves, roots and stems.

The protein resides in the nucleus. It localises to the cytoplasm. It participates in protein modification; protein ubiquitination. In terms of biological role, may act as a substrate-specific adapter of an E3 ubiquitin-protein ligase complex (CUL3-RBX1-BTB) which mediates the ubiquitination and subsequent proteasomal degradation of target proteins. Also targeted for degradation by the 26S proteasome pathway. May be involved in gametophyte development. This is BTB/POZ and TAZ domain-containing protein 1 (BT1) from Arabidopsis thaliana (Mouse-ear cress).